A 407-amino-acid polypeptide reads, in one-letter code: tRNA pseudouridine synthase 4 (407 aa).

The segment at 83–105 is disordered; that stretch reads FRPAPPHPNDRNRRRRKSNRLPD. The Nucleophile role is filled by Asp-115. Residues 274–298 are disordered; the sequence is TEQDINPQDGDEKINAKSPTTNSVT. Ser-291 carries the post-translational modification Phosphoserine. The residue at position 293 (Thr-293) is a Phosphothreonine. At Ser-296 the chain carries Phosphoserine. Position 406 is a phosphothreonine (Thr-406).

The protein belongs to the pseudouridine synthase TruB family.

The protein resides in the nucleus. The protein localises to the mitochondrion. The enzyme catalyses uridine(55) in tRNA = pseudouridine(55) in tRNA. It catalyses the reaction a uridine in mRNA = a pseudouridine in mRNA. Its function is as follows. Responsible for synthesis of pseudouridine from uracil-55 in the psi GC loop of transfer RNAs. Also catalyzes pseudouridylation of mRNAs with the consensus sequence 5'-GGUUCRA-3'. The sequence is that of tRNA pseudouridine synthase 4 from Schizosaccharomyces pombe (strain 972 / ATCC 24843) (Fission yeast).